The primary structure comprises 147 residues: uncharacterized protein (147 aa).

Positions 4 to 120 (KWAKRFFQMA…EQTEDFLSRW (117 aa)) constitute a CMP/dCMP-type deaminase domain. His67 contributes to the Zn(2+) binding site. Glu69 serves as the catalytic Proton donor. Zn(2+) is bound by residues Cys92 and Cys95.

Belongs to the cytidine and deoxycytidylate deaminase family. The cofactor is Zn(2+).

This is an uncharacterized protein from Aliivibrio fischeri (Vibrio fischeri).